The chain runs to 125 residues: Small ribosomal subunit protein uS12 (125 aa).

The disordered stretch occupies residues 1-30 (MPTISQLVRKPRAAKPLKSKVPALGNSPQK). A compositionally biased stretch (basic residues) spans 9-18 (RKPRAAKPLK). The residue at position 89 (D89) is a 3-methylthioaspartic acid. The segment at 103 to 125 (DTAGVKDRKQGRSKYGAKKPKSA) is disordered. Positions 113-125 (GRSKYGAKKPKSA) are enriched in basic residues.

This sequence belongs to the universal ribosomal protein uS12 family. As to quaternary structure, part of the 30S ribosomal subunit. Contacts proteins S8 and S17. May interact with IF1 in the 30S initiation complex.

Functionally, with S4 and S5 plays an important role in translational accuracy. Interacts with and stabilizes bases of the 16S rRNA that are involved in tRNA selection in the A site and with the mRNA backbone. Located at the interface of the 30S and 50S subunits, it traverses the body of the 30S subunit contacting proteins on the other side and probably holding the rRNA structure together. The combined cluster of proteins S8, S12 and S17 appears to hold together the shoulder and platform of the 30S subunit. This chain is Small ribosomal subunit protein uS12, found in Nitrosospira multiformis (strain ATCC 25196 / NCIMB 11849 / C 71).